The primary structure comprises 179 residues: Nucleoside-triphosphatase THEP1 (179 aa).

Residues 7-14 and 98-105 contribute to the ATP site; these read GMPGVGKT and IIIIDEIG.

The protein belongs to the THEP1 NTPase family.

It carries out the reaction a ribonucleoside 5'-triphosphate + H2O = a ribonucleoside 5'-diphosphate + phosphate + H(+). Has nucleotide phosphatase activity towards ATP, GTP, CTP, TTP and UTP. May hydrolyze nucleoside diphosphates with lower efficiency. This Pyrococcus abyssi (strain GE5 / Orsay) protein is Nucleoside-triphosphatase THEP1.